The following is a 465-amino-acid chain: Pancreatic triacylglycerol lipase (465 aa).

A signal peptide spans 1–16 (MLPLWTLSLLLGAVAG). Disulfide bonds link Cys20/Cys26 and Cys107/Cys118. Ser169 (nucleophile) is an active-site residue. Asn183 is a glycosylation site (N-linked (GlcNAc...) asparagine). The active-site Charge relay system is the Asp193. Ca(2+) contacts are provided by Glu204, Arg207, Asp209, and Asp212. A disulfide bridge connects residues Cys254 and Cys278. His280 functions as the Charge relay system in the catalytic mechanism. Cystine bridges form between Cys302-Cys313, Cys316-Cys321, and Cys449-Cys465. The 111-residue stretch at 355–465 (WRYKVSVTLS…EEVLLTLTPC (111 aa)) folds into the PLAT domain.

Belongs to the AB hydrolase superfamily. Lipase family. In terms of assembly, forms a 1:1 stoichiometric complex with (pro)colipase/CLPS.

It localises to the secreted. The catalysed reaction is a triacylglycerol + H2O = a diacylglycerol + a fatty acid + H(+). It catalyses the reaction 1,2,3-tributanoylglycerol + H2O = dibutanoylglycerol + butanoate + H(+). It carries out the reaction 1,2,3-tri-(9Z-octadecenoyl)-glycerol + H2O = di-(9Z)-octadecenoylglycerol + (9Z)-octadecenoate + H(+). The enzyme catalyses all-trans-retinyl hexadecanoate + H2O = all-trans-retinol + hexadecanoate + H(+). The catalysed reaction is 1,2-di-(9Z-octadecenoyl)-glycerol + H2O = (9Z-octadecenoyl)-glycerol + (9Z)-octadecenoate + H(+). With respect to regulation, inhibited by bile salts, is reactivated by (pro)colipase/CLPS. Its function is as follows. Plays an important role in fat metabolism. It preferentially splits the esters of long-chain fatty acids at positions 1 and 3, producing mainly 2-monoacylglycerol and free fatty acids, and shows considerably higher activity against insoluble emulsified substrates than against soluble ones. The sequence is that of Pancreatic triacylglycerol lipase from Homo sapiens (Human).